Reading from the N-terminus, the 382-residue chain is Sphingosine 1-phosphate receptor 1 (382 aa).

At V2 the chain carries N-acetylvaline. Residues 2–46 are Extracellular-facing; the sequence is VSTSIPEVKALRSSVSDYGNYDIIVRHYNYTGKLNIGAEKDHGIK. Position 10 is an N6-acetyllysine (K10). N30 is a glycosylation site (N-linked (GlcNAc...) asparagine). Residues 47-68 traverse the membrane as a helical segment; it reads LTSVVFILICCFIILENIFVLL. The Cytoplasmic portion of the chain corresponds to 69–82; it reads TIWKTKKFHRPMYY. A helical membrane pass occupies residues 83 to 104; the sequence is FIGNLALSDLLAGVAYTANLLL. The Extracellular portion of the chain corresponds to 105 to 116; the sequence is SGATTYKLTPAQ. A helical membrane pass occupies residues 117 to 138; the sequence is WFLREGSMFVALSASVFSLLAI. Position 120–121 (120–121) interacts with sphing-4-enine 1-phosphate; the sequence is RE. Topologically, residues 139 to 160 are cytoplasmic; that stretch reads AIERYITMLKMKLHNGSNSSRS. A helical transmembrane segment spans residues 161-182; it reads FLLISACWVISLILGGLPIMGW. Over 183–196 the chain is Extracellular; sequence NCISSLSSCSTVLP. Cysteines 184 and 191 form a disulfide. The chain crosses the membrane as a helical span at residues 197–224; it reads LYHKHYILFCTTVFTLLLLSIVILYCRI. Residues 225-257 are Cytoplasmic-facing; sequence YSLVRTRSRRLTFRKNISKASRSSEKSLALLKT. T236 is modified (phosphothreonine). A helical transmembrane segment spans residues 258–278; the sequence is VIIVLSVFIACWAPLFILLLL. Sphing-4-enine 1-phosphate is bound at residue 265–269; that stretch reads FIACW. At 279–289 the chain is on the extracellular side; sequence DVGCKAKTCDI. An intrachain disulfide couples C282 to C287. Residues 290–310 traverse the membrane as a helical segment; that stretch reads LYKAEYFLVLAVLNSGTNPII. The Cytoplasmic segment spans residues 311–382; the sequence is YTLTNKEMRR…MSSGNVNSSS (72 aa). Residue C328 is the site of S-palmitoyl cysteine attachment. The disordered stretch occupies residues 348-382; sequence MEFSRSKSDNSSHPQKDDGDNPETIMSSGNVNSSS. Phosphoserine occurs at positions 351 and 353. The span at 351 to 366 shows a compositional bias: basic and acidic residues; the sequence is SRSKSDNSSHPQKDDG. Over residues 371 to 382 the composition is skewed to polar residues; that stretch reads TIMSSGNVNSSS.

It belongs to the G-protein coupled receptor 1 family. Interacts with GNAI1 and GNAI3. Interacts with CD69; this interaction promotes S1PR1 degradation. Post-translationally, palmitoylated by ZDHHC5. Palmitoylation is required for targeting to plasma membrane, enabling G(i) coupling. As to expression, expressed in a wide variety of tissues with highest levels in brain, heart and spleen. Lower levels found in kidney, liver, lung, muscle, placenta, thymus, and uterus. Very low levels in intestine, stomach and testis. According to PubMed:9931453, expressed modestly in apparent endothelial cells surrounding some blood vessels (e.g. aortic trunk).

The protein localises to the cell membrane. The protein resides in the endosome. It is found in the membrane raft. Functionally, G-protein coupled receptor for the bioactive lysosphingolipid sphingosine 1-phosphate (S1P) that seems to be coupled to the G(i) subclass of heteromeric G proteins. Signaling leads to the activation of RAC1, SRC, PTK2/FAK1 and MAP kinases. Plays an important role in cell migration, probably via its role in the reorganization of the actin cytoskeleton and the formation of lamellipodia in response to stimuli that increase the activity of the sphingosine kinase SPHK1. Required for normal chemotaxis toward sphingosine 1-phosphate. Required for normal embryonic heart development and normal cardiac morphogenesis. Plays an important role in the regulation of sprouting angiogenesis and vascular maturation. Inhibits sprouting angiogenesis to prevent excessive sprouting during blood vessel development. Required for normal egress of mature T-cells from the thymus into the blood stream and into peripheral lymphoid organs. Plays a role in the migration of osteoclast precursor cells, the regulation of bone mineralization and bone homeostasis. Plays a role in responses to oxidized 1-palmitoyl-2-arachidonoyl-sn-glycero-3-phosphocholine by pulmonary endothelial cells and in the protection against ventilator-induced lung injury. This Mus musculus (Mouse) protein is Sphingosine 1-phosphate receptor 1.